Consider the following 328-residue polypeptide: Phosphate acyltransferase (328 aa).

This sequence belongs to the PlsX family. Homodimer. Probably interacts with PlsY.

The protein localises to the cytoplasm. The catalysed reaction is a fatty acyl-[ACP] + phosphate = an acyl phosphate + holo-[ACP]. It participates in lipid metabolism; phospholipid metabolism. Functionally, catalyzes the reversible formation of acyl-phosphate (acyl-PO(4)) from acyl-[acyl-carrier-protein] (acyl-ACP). This enzyme utilizes acyl-ACP as fatty acyl donor, but not acyl-CoA. The protein is Phosphate acyltransferase of Staphylococcus aureus (strain USA300).